A 318-amino-acid chain; its full sequence is HPr kinase/phosphorylase (318 aa).

Residues histidine 146 and lysine 167 contribute to the active site. ATP is bound at residue 161–168; it reads GESGLGKS. Serine 168 lines the Mg(2+) pocket. Aspartate 185 serves as the catalytic Proton acceptor; for phosphorylation activity. Proton donor; for dephosphorylation activity. The segment at 209–218 is important for the catalytic mechanism of both phosphorylation and dephosphorylation; sequence LEVRGIGLLD. Residue glutamate 210 participates in Mg(2+) binding. The active site involves arginine 252. Residues 273-278 are important for the catalytic mechanism of dephosphorylation; the sequence is QVVAGR.

Belongs to the HPrK/P family. In terms of assembly, homohexamer. Mg(2+) is required as a cofactor.

The enzyme catalyses [HPr protein]-L-serine + ATP = [HPr protein]-O-phospho-L-serine + ADP + H(+). The catalysed reaction is [HPr protein]-O-phospho-L-serine + phosphate + H(+) = [HPr protein]-L-serine + diphosphate. Its function is as follows. Catalyzes the ATP- as well as the pyrophosphate-dependent phosphorylation of a specific serine residue in HPr, a phosphocarrier protein of the phosphoenolpyruvate-dependent sugar phosphotransferase system (PTS). HprK/P also catalyzes the pyrophosphate-producing, inorganic phosphate-dependent dephosphorylation (phosphorolysis) of seryl-phosphorylated HPr (P-Ser-HPr). The sequence is that of HPr kinase/phosphorylase from Acidovorax sp. (strain JS42).